Here is a 467-residue protein sequence, read N- to C-terminus: ATP synthase subunit beta, sodium ion specific (467 aa).

Residue 151–158 coordinates ATP; the sequence is GGAGVGKT.

This sequence belongs to the ATPase alpha/beta chains family. F-type ATPases have 2 components, CF(1) - the catalytic core - and CF(0) - the membrane proton channel. CF(1) has five subunits: alpha(3), beta(3), gamma(1), delta(1), epsilon(1). CF(0) has three main subunits: a, b and c.

Its subcellular location is the cell membrane. It catalyses the reaction 4 Na(+)(in) + ATP + H2O = 4 Na(+)(out) + ADP + phosphate + H(+). Produces ATP from ADP in the presence of a sodium ion gradient across the membrane. The beta chain is the catalytic subunit. The protein is ATP synthase subunit beta, sodium ion specific of Propionigenium modestum.